Here is a 208-residue protein sequence, read N- to C-terminus: FMN-dependent NADH:quinone oxidoreductase 1 (208 aa).

It belongs to the azoreductase type 1 family. As to quaternary structure, homodimer. It depends on FMN as a cofactor.

It catalyses the reaction 2 a quinone + NADH + H(+) = 2 a 1,4-benzosemiquinone + NAD(+). The enzyme catalyses N,N-dimethyl-1,4-phenylenediamine + anthranilate + 2 NAD(+) = 2-(4-dimethylaminophenyl)diazenylbenzoate + 2 NADH + 2 H(+). Quinone reductase that provides resistance to thiol-specific stress caused by electrophilic quinones. Functionally, also exhibits azoreductase activity. Catalyzes the reductive cleavage of the azo bond in aromatic azo compounds to the corresponding amines. In Bacillus licheniformis (strain ATCC 14580 / DSM 13 / JCM 2505 / CCUG 7422 / NBRC 12200 / NCIMB 9375 / NCTC 10341 / NRRL NRS-1264 / Gibson 46), this protein is FMN-dependent NADH:quinone oxidoreductase 1.